We begin with the raw amino-acid sequence, 359 residues long: Molybdenum import ATP-binding protein ModC (359 aa).

The ABC transporter domain occupies 1–233 (MSGLTVSIRG…IDAESEGGGV (233 aa)). 32–39 (GHSGAGKT) is an ATP binding site. In terms of domain architecture, Mop spans 289-355 (AISIRNLLPV…VKAVSVDRAA (67 aa)).

It belongs to the ABC transporter superfamily. Molybdate importer (TC 3.A.1.8) family. The complex is composed of two ATP-binding proteins (ModC), two transmembrane proteins (ModB) and a solute-binding protein (ModA).

It is found in the cell inner membrane. It catalyses the reaction molybdate(out) + ATP + H2O = molybdate(in) + ADP + phosphate + H(+). Functionally, part of the ABC transporter complex ModABC involved in molybdenum import. Responsible for energy coupling to the transport system. In Brucella suis biovar 1 (strain 1330), this protein is Molybdenum import ATP-binding protein ModC.